The following is a 378-amino-acid chain: Flap endonuclease 1 (378 aa).

The segment at methionine 1–arginine 105 is N-domain. Residue aspartate 34 participates in Mg(2+) binding. Arginine 47 and arginine 71 together coordinate DNA. 5 residues coordinate Mg(2+): aspartate 87, glutamate 156, glutamate 158, aspartate 177, and aspartate 179. Residues glutamate 120 to histidine 251 form an I-domain region. Residue glutamate 156 participates in DNA binding. Residues glycine 229 and aspartate 231 each contribute to the DNA site. Residue aspartate 231 participates in Mg(2+) binding. The interaction with PCNA stretch occupies residues valine 337 to phenylalanine 345. Positions alanine 356–lysine 367 are enriched in low complexity. The segment at alanine 356–arginine 378 is disordered. Positions threonine 368–arginine 378 are enriched in basic residues.

This sequence belongs to the XPG/RAD2 endonuclease family. FEN1 subfamily. In terms of assembly, interacts with PCNA. Three molecules of FEN1 bind to one PCNA trimer with each molecule binding to one PCNA monomer. PCNA stimulates the nuclease activity without altering cleavage specificity. Mg(2+) is required as a cofactor. In terms of processing, phosphorylated. Phosphorylation upon DNA damage induces relocalization to the nuclear plasma.

The protein resides in the nucleus. It localises to the nucleolus. The protein localises to the nucleoplasm. It is found in the mitochondrion. In terms of biological role, structure-specific nuclease with 5'-flap endonuclease and 5'-3' exonuclease activities involved in DNA replication and repair. During DNA replication, cleaves the 5'-overhanging flap structure that is generated by displacement synthesis when DNA polymerase encounters the 5'-end of a downstream Okazaki fragment. It enters the flap from the 5'-end and then tracks to cleave the flap base, leaving a nick for ligation. Also involved in the long patch base excision repair (LP-BER) pathway, by cleaving within the apurinic/apyrimidinic (AP) site-terminated flap. Acts as a genome stabilization factor that prevents flaps from equilibrating into structures that lead to duplications and deletions. Also possesses 5'-3' exonuclease activity on nicked or gapped double-stranded DNA, and exhibits RNase H activity. Also involved in replication and repair of rDNA and in repairing mitochondrial DNA. The chain is Flap endonuclease 1 from Eremothecium gossypii (strain ATCC 10895 / CBS 109.51 / FGSC 9923 / NRRL Y-1056) (Yeast).